The primary structure comprises 541 residues: Light-independent protochlorophyllide reductase subunit B (541 aa).

Asp36 contacts [4Fe-4S] cluster. The active-site Proton donor is the Asp286. Residue 421–422 (GM) coordinates substrate.

The protein belongs to the ChlB/BchB/BchZ family. As to quaternary structure, protochlorophyllide reductase is composed of three subunits; BchL, BchN and BchB. Forms a heterotetramer of two BchB and two BchN subunits. [4Fe-4S] cluster is required as a cofactor.

It carries out the reaction chlorophyllide a + oxidized 2[4Fe-4S]-[ferredoxin] + 2 ADP + 2 phosphate = protochlorophyllide a + reduced 2[4Fe-4S]-[ferredoxin] + 2 ATP + 2 H2O. It functions in the pathway porphyrin-containing compound metabolism; bacteriochlorophyll biosynthesis (light-independent). Functionally, component of the dark-operative protochlorophyllide reductase (DPOR) that uses Mg-ATP and reduced ferredoxin to reduce ring D of protochlorophyllide (Pchlide) to form chlorophyllide a (Chlide). This reaction is light-independent. The NB-protein (BchN-BchB) is the catalytic component of the complex. This Chloroflexus aurantiacus (strain ATCC 29364 / DSM 637 / Y-400-fl) protein is Light-independent protochlorophyllide reductase subunit B.